Consider the following 544-residue polypeptide: MFS-type transporter prx5 (544 aa).

The tract at residues 1–28 is disordered; sequence MAVDTEKDSVQAGSPMETPGSPVDETTE. 13 helical membrane passes run 36–56, 90–110, 116–136, 148–168, 178–198, 221–241, 249–269, 290–310, 330–350, 361–381, 387–407, 418–438, and 505–525; these read WIVS…IPVV, LDHL…VASA, VIAG…AAFA, IGVV…PVTA, AWNF…LLFL, GAFL…WAGV, VVAP…WESF, FTAP…SSIL, VILS…LTCF, LTGS…VTPT, IAFI…SIAI, GVSG…ATSI, and AIFV…AACL.

It belongs to the major facilitator superfamily.

The protein resides in the cell membrane. In terms of biological role, MFS-type transporter; part of the gene cluster that mediates the biosynthesis of PR-toxin, a bicyclic sesquiterpene belonging to the eremophilane class and acting as a mycotoxin. The chain is MFS-type transporter prx5 from Penicillium rubens (strain ATCC 28089 / DSM 1075 / NRRL 1951 / Wisconsin 54-1255) (Penicillium chrysogenum).